Reading from the N-terminus, the 386-residue chain is Succinate--CoA ligase [ADP-forming] subunit beta (386 aa).

The ATP-grasp domain maps to 9 to 244 (KEIFRKYGVP…LAEEEPREIQ (236 aa)). ATP-binding positions include lysine 46, 53–55 (GRG), glutamate 99, leucine 102, and glutamate 107. 2 residues coordinate Mg(2+): asparagine 199 and aspartate 213. Substrate contacts are provided by residues asparagine 264 and 321 to 323 (GIM).

The protein belongs to the succinate/malate CoA ligase beta subunit family. As to quaternary structure, heterotetramer of two alpha and two beta subunits. Mg(2+) is required as a cofactor.

It carries out the reaction succinate + ATP + CoA = succinyl-CoA + ADP + phosphate. The catalysed reaction is GTP + succinate + CoA = succinyl-CoA + GDP + phosphate. Its pathway is carbohydrate metabolism; tricarboxylic acid cycle; succinate from succinyl-CoA (ligase route): step 1/1. In terms of biological role, succinyl-CoA synthetase functions in the citric acid cycle (TCA), coupling the hydrolysis of succinyl-CoA to the synthesis of either ATP or GTP and thus represents the only step of substrate-level phosphorylation in the TCA. The beta subunit provides nucleotide specificity of the enzyme and binds the substrate succinate, while the binding sites for coenzyme A and phosphate are found in the alpha subunit. The polypeptide is Succinate--CoA ligase [ADP-forming] subunit beta (Myxococcus xanthus (strain DK1622)).